The following is a 281-amino-acid chain: Insecticidal crystal toxin protein (281 aa).

Antigenic epitope regions lie at residues 54-78 (NYSH…VYTF), 91-104 (IYTH…AVKA), 108-116 (GTASKVVQG), 131-148 (FKIT…FIRI), 160-172 (AVIN…VAEL), 189-196 (KYKDFQYL), 208-216 (QNISLVFNR), 221-236 (TNTT…LPIT), and 247-256 (KLETVQQIIN).

Belongs to the delta endotoxin family.

Functionally, promotes colloidosmotic lysis by binding to the midgut epithelial cells of insects. Active against Mamestra brassicae. The chain is Insecticidal crystal toxin protein from Bacillus thuringiensis subsp. kurstaki.